The following is a 337-amino-acid chain: Dihydroorotate dehydrogenase (quinone) (337 aa).

FMN-binding positions include 61 to 65 (AGLDK) and threonine 85. A substrate-binding site is contributed by lysine 65. A substrate-binding site is contributed by 110-114 (NRMGF). Positions 138 and 171 each coordinate FMN. Asparagine 171 contacts substrate. The Nucleophile role is filled by serine 174. Asparagine 176 is a binding site for substrate. Positions 216 and 244 each coordinate FMN. 245–246 (NT) contacts substrate. Residues glycine 267, glycine 296, and 317 to 318 (YS) each bind FMN.

The protein belongs to the dihydroorotate dehydrogenase family. Type 2 subfamily. In terms of assembly, monomer. The cofactor is FMN.

It localises to the cell membrane. It catalyses the reaction (S)-dihydroorotate + a quinone = orotate + a quinol. Its pathway is pyrimidine metabolism; UMP biosynthesis via de novo pathway; orotate from (S)-dihydroorotate (quinone route): step 1/1. Functionally, catalyzes the conversion of dihydroorotate to orotate with quinone as electron acceptor. This Thiobacillus denitrificans (strain ATCC 25259 / T1) protein is Dihydroorotate dehydrogenase (quinone).